A 109-amino-acid polypeptide reads, in one-letter code: Mitochondrial pyruvate carrier 1 (109 aa).

Ala2 carries the N-acetylalanine modification. Topologically, residues 2-20 (AGALVRKAADYVRSKDFRD) are mitochondrial matrix. Residues 21 to 41 (YLMSTHFWGPVANWGLPIAAI) form a helical membrane-spanning segment. Residues 42-52 (NDMKKSPEIIS) are Mitochondrial intermembrane-facing. Residues 53–71 (GRMTFALCCYSLTFMRFAY) traverse the membrane as a helical segment. An N6-acetyllysine modification is found at Lys72. Over 72 to 109 (KVQPRNWLLFACHVTNEVAQLIQGGRLINYEMSKRPSA) the chain is Mitochondrial matrix.

This sequence belongs to the mitochondrial pyruvate carrier (MPC) (TC 2.A.105) family. Homodimer. Forms heterodimer with MPC2. The heterodimer is the more stable and dominant form.

It localises to the mitochondrion inner membrane. The catalysed reaction is pyruvate(out) + H(+)(out) = pyruvate(in) + H(+)(in). In terms of biological role, mediates the uptake of pyruvate into mitochondria. The chain is Mitochondrial pyruvate carrier 1 (Mpc1) from Mus musculus (Mouse).